The sequence spans 232 residues: Probable dihydroorotate dehydrogenase B (NAD(+)), electron transfer subunit (232 aa).

Positions 1–86 (MYYTRITQIE…RGAFGSAFTP (86 aa)) constitute an FAD-binding FR-type domain. [2Fe-2S] cluster-binding residues include cysteine 202, cysteine 207, cysteine 210, and cysteine 219.

Belongs to the PyrK family. As to quaternary structure, heterotetramer of 2 PyrK and 2 PyrD type B subunits. [2Fe-2S] cluster serves as cofactor. Requires FAD as cofactor.

Its pathway is pyrimidine metabolism; UMP biosynthesis via de novo pathway; orotate from (S)-dihydroorotate (NAD(+) route): step 1/1. Its function is as follows. Responsible for channeling the electrons from the oxidation of dihydroorotate from the FMN redox center in the PyrD type B subunit to the ultimate electron acceptor NAD(+). This chain is Probable dihydroorotate dehydrogenase B (NAD(+)), electron transfer subunit, found in Archaeoglobus fulgidus (strain ATCC 49558 / DSM 4304 / JCM 9628 / NBRC 100126 / VC-16).